An 80-amino-acid polypeptide reads, in one-letter code: 17 kDa surface antigen (80 aa).

The segment covering 47 to 58 (ALETTPSGTSIE) has biased composition (polar residues). The disordered stretch occupies residues 47-80 (ALETTPSGTSIEWRNPDNGNYGYVTPSKTYKNST).

This sequence belongs to the rickettsiale 17 kDa surface antigen family.

Its subcellular location is the cell outer membrane. The chain is 17 kDa surface antigen (omp) from Rickettsia canadensis.